Consider the following 843-residue polypeptide: Glycogen phosphorylase, brain form (843 aa).

Ala-2 is subject to N-acetylalanine. Ser-15 carries the phosphoserine; by PHK; in form phosphorylase A modification. Residues Asp-43, Tyr-197, and Arg-310 each contribute to the AMP site. At Tyr-197 the chain carries Phosphotyrosine. Phosphotyrosine is present on Tyr-473. Lys-569 contributes to the pyridoxal 5'-phosphate binding site. The tract at residues 677-678 is pyridoxal 5'-phosphate; sequence TG. An N6-(pyridoxal phosphate)lysine modification is found at Lys-681.

The protein belongs to the glycogen phosphorylase family. Homodimer. Dimers associate into a tetramer to form the enzymatically active phosphorylase A. Pyridoxal 5'-phosphate serves as cofactor. Phosphorylated. Phosphorylation of Ser-15 converts phosphorylase B (unphosphorylated) to phosphorylase A.

It carries out the reaction [(1-&gt;4)-alpha-D-glucosyl](n) + phosphate = [(1-&gt;4)-alpha-D-glucosyl](n-1) + alpha-D-glucose 1-phosphate. Its activity is regulated as follows. Activity of phosphorylase is controlled both by allosteric means (through the non-covalent binding of metabolites) and by covalent modification. Thus AMP allosterically activates, whereas ATP, ADP, and glucose-6-phosphate allosterically inhibit, phosphorylase B. Activated upon phosphorylation. In terms of biological role, glycogen phosphorylase that regulates glycogen mobilization. Phosphorylase is an important allosteric enzyme in carbohydrate metabolism. Enzymes from different sources differ in their regulatory mechanisms and in their natural substrates. However, all known phosphorylases share catalytic and structural properties. The polypeptide is Glycogen phosphorylase, brain form (Homo sapiens (Human)).